The primary structure comprises 421 residues: Type II methyltransferase M.SfiI (421 aa).

Belongs to the N(4)/N(6)-methyltransferase family. N(4) subfamily.

The catalysed reaction is a 2'-deoxycytidine in DNA + S-adenosyl-L-methionine = an N(4)-methyl-2'-deoxycytidine in DNA + S-adenosyl-L-homocysteine + H(+). A beta subtype methylase, recognizes the double-stranded sequence 5'-GGCCNNNNNGGCC-3', methylates C-? on both strands, and protects the DNA from cleavage by the SfiI endonuclease. The chain is Type II methyltransferase M.SfiI from Streptomyces fimbriatus.